Consider the following 50-residue polypeptide: MISMLRCTFFFLSVILITSYFVTPTMSIKCNCKRHVIKPHICRKICGKNG.

The signal sequence occupies residues 1–27 (MISMLRCTFFFLSVILITSYFVTPTMS). Residue Lys-29 is modified to N6-formyllysine; partial. 2 cysteine pairs are disulfide-bonded: Cys-30-Cys-42 and Cys-32-Cys-46. N6-formyllysine; partial is present on residues Lys-44 and Lys-48. Asn-49 carries the asparagine amide modification.

Expressed by the venom gland.

The protein resides in the secreted. Potent anti-inflammatory agent. At low concentrations, mediates the degranulation of mast cells thus evoking an inflammatory response. Also acts as a neurotoxin capable of blocking a class of voltage-gated potassium channels. The sequence is that of Mast cell degranulating peptide from Apis mellifera (Honeybee).